The following is a 308-amino-acid chain: Malonate utilization transcriptional regulator (308 aa).

One can recognise an HTH lysR-type domain in the interval 9 to 66 (ITFRKLSVFMMFMAKGNIARTAEAMKLSSVSVHRALHTLEEGVGCPLFVHKGRNLLPL). The segment at residues 26–45 (IARTAEAMKLSSVSVHRALH) is a DNA-binding region (H-T-H motif).

It belongs to the LysR transcriptional regulatory family.

Functionally, transcriptional regulator of the mau genes for malonate utilization. This Klebsiella pneumoniae protein is Malonate utilization transcriptional regulator (mauR).